A 289-amino-acid polypeptide reads, in one-letter code: tRNA pseudouridine synthase B (289 aa).

Asp38 functions as the Nucleophile in the catalytic mechanism.

The protein belongs to the pseudouridine synthase TruB family. Type 1 subfamily.

It catalyses the reaction uridine(55) in tRNA = pseudouridine(55) in tRNA. Functionally, responsible for synthesis of pseudouridine from uracil-55 in the psi GC loop of transfer RNAs. The protein is tRNA pseudouridine synthase B of Clostridium novyi (strain NT).